We begin with the raw amino-acid sequence, 195 residues long: NADH-quinone oxidoreductase subunit B (195 aa).

[4Fe-4S] cluster-binding residues include cysteine 74, cysteine 75, cysteine 139, and cysteine 169.

The protein belongs to the complex I 20 kDa subunit family. As to quaternary structure, NDH-1 is composed of 14 different subunits. Subunits NuoB, C, D, E, F, and G constitute the peripheral sector of the complex. Requires [4Fe-4S] cluster as cofactor.

The protein localises to the cell inner membrane. It catalyses the reaction a quinone + NADH + 5 H(+)(in) = a quinol + NAD(+) + 4 H(+)(out). NDH-1 shuttles electrons from NADH, via FMN and iron-sulfur (Fe-S) centers, to quinones in the respiratory chain. The immediate electron acceptor for the enzyme in this species is believed to be ubiquinone. Couples the redox reaction to proton translocation (for every two electrons transferred, four hydrogen ions are translocated across the cytoplasmic membrane), and thus conserves the redox energy in a proton gradient. The protein is NADH-quinone oxidoreductase subunit B of Methylobacterium sp. (strain 4-46).